Here is an 803-residue protein sequence, read N- to C-terminus: Integrin beta-1 (803 aa).

The N-terminal stretch at 1–24 (MAETNLTLLTWAGILCCLIWSGSA) is a signal peptide. Blocked amino end (Gln) is present on glutamine 25. The Extracellular portion of the chain corresponds to 25–733 (QQGGSDCIKA…ETPECPSGPD (709 aa)). The 51-residue stretch at 30 to 80 (DCIKANAKSCGECIQAGPNCGWCKKTDFLQEGEPTSARCDDLAALKSKGCP) folds into the PSI domain. 22 disulfide bridges follow: cysteine 31–cysteine 49, cysteine 39–cysteine 469, cysteine 42–cysteine 68, cysteine 52–cysteine 79, cysteine 211–cysteine 217, cysteine 265–cysteine 305, cysteine 405–cysteine 419, cysteine 439–cysteine 467, cysteine 471–cysteine 491, cysteine 482–cysteine 494, cysteine 496–cysteine 505, cysteine 507–cysteine 538, cysteine 521–cysteine 536, cysteine 530–cysteine 541, cysteine 543–cysteine 558, cysteine 560–cysteine 581, cysteine 565–cysteine 579, cysteine 573–cysteine 584, cysteine 586–cysteine 595, cysteine 597–cysteine 620, cysteine 604–cysteine 618, and cysteine 612–cysteine 623. One can recognise a VWFA domain in the interval 144 to 382 (DYPIDLYYLM…QLIIDAYNSL (239 aa)). The Mg(2+) site is built by serine 156 and serine 158. Serine 158, aspartate 161, aspartate 162, and glutamate 193 together coordinate Ca(2+). The tract at residues 211-217 (CTGDQNC) is CX3CL1-binding. Residue asparagine 216 is glycosylated (N-linked (GlcNAc...) asparagine). Residues asparagine 248, aspartate 250, proline 252, and glutamate 253 each contribute to the Ca(2+) site. Residue glutamate 253 coordinates Mg(2+). Asparagine 273 carries N-linked (GlcNAc...) asparagine glycosylation. Residues 299-318 (LPNDGKCHLENNMYTMSHYY) are CX3CL1-binding. Residues asparagine 367, asparagine 410, asparagine 421, asparagine 433, asparagine 445, and asparagine 486 are each glycosylated (N-linked (GlcNAc...) asparagine). Residues 387–470 (ILENSKLPKE…IHLQFICDCL (84 aa)) are interaction with TMEM182. I-EGF domains follow at residues 471-506 (CQSE…RLCE), 507-559 (CSTD…KYCE), 560-596 (CDNF…SACD), and 597-636 (CSLD…PTCE). Asparagine 525 carries N-linked (GlcNAc...) asparagine glycosylation. N-linked (GlcNAc...) asparagine glycosylation occurs at asparagine 589. N-linked (GlcNAc...) asparagine glycosylation is present at asparagine 624. 6 disulfides stabilise this stretch: cysteine 625–cysteine 635, cysteine 638–cysteine 641, cysteine 645–cysteine 696, cysteine 651–cysteine 670, cysteine 654–cysteine 666, and cysteine 704–cysteine 728. N-linked (GlcNAc...) asparagine glycosylation occurs at asparagine 674. Residues 734–756 (IIPIVAGVVAGIVLIGLALLLIW) form a helical membrane-spanning segment. Residues 757–803 (KLLMIIHDRREFAKFEKEKMNAKWDTGENPIYKSAVTTVVNPKYEGK) lie on the Cytoplasmic side of the membrane. Position 788 is a phosphotyrosine; by Tyr-kinases (tyrosine 788).

The protein belongs to the integrin beta chain family. Heterodimer of an alpha and a beta subunit. Beta-1 associates with either alpha-1, alpha-2, alpha-3, alpha-4, alpha-5, alpha-6, alpha-7, alpha-8, alpha-9, alpha-10, alpha-11 or alpha-V. Interacts with TMEM182 and LAMB1. As to expression, expressed on surface of embryonic fibroblasts (at protein level).

Its subcellular location is the cell membrane. The protein resides in the cell projection. The protein localises to the invadopodium membrane. It is found in the ruffle membrane. It localises to the melanosome. Its subcellular location is the lamellipodium. The protein resides in the ruffle. The protein localises to the cell junction. It is found in the focal adhesion. Integrins alpha-1/beta-1, alpha-2/beta-1, alpha-10/beta-1 and alpha-11/beta-1 are receptors for collagen. Integrins alpha-1/beta-1 and alpha-2/beta-1 recognize the proline-hydroxylated sequence G-F-P-G-E-R in collagen. Integrins alpha-2/beta-1, alpha-3/beta-1, alpha-4/beta-1, alpha-5/beta-1, alpha-8/beta-1, alpha-10/beta-1, alpha-11/beta-1 and alpha-V/beta-1 are receptors for fibronectin. Alpha-4/beta-1 recognizes one or more domains within the alternatively spliced CS-1 and CS-5 regions of fibronectin. Integrin alpha-5/beta-1 is a receptor for fibrinogen. Integrin alpha-1/beta-1, alpha-2/beta-1, alpha-6/beta-1 and alpha-7/beta-1 are receptors for lamimin. Integrin alpha-6/beta-1 (ITGA6:ITGB1) is present in oocytes and is involved in sperm-egg fusion. Integrin alpha-4/beta-1 is a receptor for VCAM1 and recognizes the sequence Q-I-D-S in VCAM1. Integrin alpha-9/beta-1 is a receptor for VCAM1, cytotactin and osteopontin. It recognizes the sequence A-E-I-D-G-I-E-L in cytotactin. Integrin alpha-3/beta-1 is a receptor for epiligrin, thrombospondin and CSPG4. Integrin alpha-3/beta-1 provides a docking site for FAP (seprase) at invadopodia plasma membranes in a collagen-dependent manner and hence may participate in the adhesion, formation of invadopodia and matrix degradation processes, promoting cell invasion. Alpha-3/beta-1 may mediate with LGALS3 the stimulation by CSPG4 of endothelial cells migration. Integrin alpha-V/beta-1 is a receptor for vitronectin. Beta-1 integrins recognize the sequence R-G-D in a wide array of ligands. When associated with alpha-7/beta-1 integrin, regulates cell adhesion and laminin matrix deposition. Involved in promoting endothelial cell motility and angiogenesis. Involved in osteoblast compaction through the fibronectin fibrillogenesis cell-mediated matrix assembly process and the formation of mineralized bone nodules. May be involved in up-regulation of the activity of kinases such as PKC via binding to KRT1. Together with KRT1 and RACK1, serves as a platform for SRC activation or inactivation. ITGA4:ITGB1 binds to fractalkine (CX3CL1) and may act as its coreceptor in CX3CR1-dependent fractalkine signaling. ITGA4:ITGB1 and ITGA5:ITGB1 bind to PLA2G2A via a site (site 2) which is distinct from the classical ligand-binding site (site 1) and this induces integrin conformational changes and enhanced ligand binding to site 1. ITGA5:ITGB1 acts as a receptor for fibrillin-1 (FBN1) and mediates R-G-D-dependent cell adhesion to FBN1. ITGA5:ITGB1 acts as a receptor for fibronectin FN1 and mediates R-G-D-dependent cell adhesion to FN1. ITGA5:ITGB1 is a receptor for IL1B and binding is essential for IL1B signaling. ITGA5:ITGB3 is a receptor for soluble CD40LG and is required for CD40/CD40LG signaling. Plays an important role in myoblast differentiation and fusion during skeletal myogenesis. In Gallus gallus (Chicken), this protein is Integrin beta-1 (ITGB1).